The chain runs to 178 residues: Large ribosomal subunit protein uL6 (178 aa).

This sequence belongs to the universal ribosomal protein uL6 family. Part of the 50S ribosomal subunit.

In terms of biological role, this protein binds to the 23S rRNA, and is important in its secondary structure. It is located near the subunit interface in the base of the L7/L12 stalk, and near the tRNA binding site of the peptidyltransferase center. This is Large ribosomal subunit protein uL6 from Kocuria rhizophila (strain ATCC 9341 / DSM 348 / NBRC 103217 / DC2201).